The chain runs to 927 residues: Nonsense-mediated mRNA decay factor SMG8 (927 aa).

3 disordered regions span residues 543-581 (NTGK…NTAS), 611-636 (QARS…DTEN), and 643-662 (QEPA…AVST). Residues 551–566 (QDEDAGEDEAEEEEGQ) are compositionally biased toward acidic residues. The span at 613–633 (RSEQLSNSEQNTTRSGSSSVD) shows a compositional bias: polar residues. Positions 644–654 (EPAKKEAREDV) are enriched in basic and acidic residues.

It belongs to the SMG8 family.

Functionally, involved in nonsense-mediated decay (NMD) of mRNAs containing premature stop codons. Probable component of kinase complex containing nonC and recruited to stalled ribosomes. The chain is Nonsense-mediated mRNA decay factor SMG8 from Drosophila sechellia (Fruit fly).